A 1298-amino-acid chain; its full sequence is MLILRGAPALSAFRHSKLLEQLKQKVSAVSGLYAEFAHFADVNDVLTGEEQQVLDRLLKYGPSVPVQEPAGRLFLVLPRFGTISPWSSKASDIARNCGLTKIQRIERGIAFYVEGQFSDADAQAIADSLHDRMTQLVLGDHAQAAGLFSHAEPKPLTAVDILGGGRAALEKANVELGLALAEDEIDYLITSFNGLGRNPHDIELMMFAQANSEHCRHKIFNASWDIDGQSQEKSLFGMIKNTYEMHSEGVLSAYKDNASVIVGSVAGRFFPDPDTRQYGAVQEPVHILMKVETHNHPTAIAPFPGAATGSGGEIRDEGATGRGAKPKAGLTGFTVSNLQIPGFVQPWEVPYGKPERIVTALDIMIEGPLGGAAFNNEFGRPALTGYFRTFEQSITTPHGDEVRGYHKPIMLAGGMGNIREDHVQKAEITVGSKLIVLGGPAMLIGLGGGAASSMATGTSSADLDFASVQRENPEMERRCQEVIDRCWQLGDRNPISFIHDVGAGGLSNAFPELVNDGDRGGRFELRNVPNDEPGMAPLEIWSNESQERYVLAVGVADYERFKAICERERCPFAVVGEATAEPQLTVTDSHFGNSPVDMPLEVLLGKAPRMHRSVAREAEIGDDFDPSTLDIEESVQRVLRHPAVASKSFLITIGDRSITGLVARDQMVGPWQVPVADCAVTATSFDVNTGEAMAMGERTPLALLDAPASGRMAIGETLTNIAASRIEKLSDIKLSANWMSAAGHPGEDARLYDTVKAVGMELCPELGITIPVGKDSMSMKTRWSDEGTEKSVTSPLSLIVTGFAPVVDIRKTLTPELRMDKGITDLILIDLGRGQNRMGASILAQTHGKLGRVAPDVDDAEDLKAFFAVIQGLNSDGHILSYHDRSDGGLLVSTLEMAFAGHCGLNLHLDGLADNVSELSAILFNEELGAVIQVRQDATPLVLAQFSAAGLEDCVAVIGQPINNDEVSISFLGEPVFSGQRRLLQRQWAETSYQIQRLRDNAECADQEFDALLEEDNPGLTVKLGFDVNEDIAAPYIKTGVRPQVAVLREQGVNGQVEMAAAFDRAGFNAIDVHMSDILAGRVDLNDFKGMVACGGFSYGDVLGAGEGWAKSALFNSRARDAFQGFFERSDSFTLGVCNGCQMLSNLHELIPGSEFWPHFVRNRSEQFEARVAMVQVQESASIFLQGMAGSRMPIAIAHGEGHAEFRNDDALLEADVSGTVALRFVDNHGKVTESYPANPNGSPRGIGGMTTLDGRVTIMMPHPERVFRAVQNSWRPEDWNEDAAWMRMFRNARAWVN.

The tract at residues 303–327 (FPGAATGSGGEIRDEGATGRGAKPK) is disordered. ATP contacts are provided by residues 305-316 (GAATGSGGEIRD), 384-386 (TGY), and Ala-676. The Mg(2+) site is built by Asp-677, Glu-716, Asn-720, and Asp-884. Ser-886 contacts ATP. Positions 1045 to 1298 (VAVLREQGVN…MFRNARAWVN (254 aa)) constitute a Glutamine amidotransferase type-1 domain. The active-site Nucleophile is Cys-1138. Residues His-1263 and Glu-1265 contribute to the active site.

It in the N-terminal section; belongs to the FGAMS family. Monomer.

The protein localises to the cytoplasm. It carries out the reaction N(2)-formyl-N(1)-(5-phospho-beta-D-ribosyl)glycinamide + L-glutamine + ATP + H2O = 2-formamido-N(1)-(5-O-phospho-beta-D-ribosyl)acetamidine + L-glutamate + ADP + phosphate + H(+). It participates in purine metabolism; IMP biosynthesis via de novo pathway; 5-amino-1-(5-phospho-D-ribosyl)imidazole from N(2)-formyl-N(1)-(5-phospho-D-ribosyl)glycinamide: step 1/2. Phosphoribosylformylglycinamidine synthase involved in the purines biosynthetic pathway. Catalyzes the ATP-dependent conversion of formylglycinamide ribonucleotide (FGAR) and glutamine to yield formylglycinamidine ribonucleotide (FGAM) and glutamate. The sequence is that of Phosphoribosylformylglycinamidine synthase from Pseudomonas syringae pv. tomato (strain ATCC BAA-871 / DC3000).